The chain runs to 273 residues: Undecaprenyl-diphosphatase (273 aa).

Transmembrane regions (helical) follow at residues 39–59 (SGLT…VVYF), 86–106 (LPFL…LFET), 117–137 (LLIG…DLFG), 146–166 (VTVS…IPGV), 189–209 (FSFL…MLHL), 220–240 (LPLA…VAFL), and 249–269 (IAPF…VILT).

Belongs to the UppP family.

Its subcellular location is the cell inner membrane. The catalysed reaction is di-trans,octa-cis-undecaprenyl diphosphate + H2O = di-trans,octa-cis-undecaprenyl phosphate + phosphate + H(+). Functionally, catalyzes the dephosphorylation of undecaprenyl diphosphate (UPP). Confers resistance to bacitracin. The sequence is that of Undecaprenyl-diphosphatase from Pelobacter propionicus (strain DSM 2379 / NBRC 103807 / OttBd1).